A 41-amino-acid chain; its full sequence is Plantazolicin (41 aa).

Positions 1–27 (MTKITIPTALSAKVHGEGQHLFEPMAA) are excised as a propeptide. N2,N2-dimethylarginine; in form plantazolicin A is present on Arg-28. The thiazole-4-carboxylic acid (Arg-Cys) cross-link spans 28-29 (RC). 2 cross-links (5-methyloxazole-4-carboxylic acid (Cys-Thr)) span residues 29–30 (CT) and 31–32 (CT). Residues 30 to 31 (TC) constitute a cross-link (thiazole-4-carboxylic acid (Thr-Cys)). The segment at residues 32-33 (TT) is a cross-link (5-methyloxazole-4-carboxylic acid (Thr-Thr)). The segment at residues 35–36 (IS) is a cross-link (oxazole-4-carboxylic acid (Ile-Ser)). Cross-links (oxazole-4-carboxylic acid (Ser-Ser)) lie at residues 36-37 (SS), 37-38 (SS), and 38-39 (SS). A cross-link (5-methyloxazoline-4-carboxylic acid (Ser-Thr)) is located at residues 39–40 (ST).

In terms of processing, maturation of thiazole and oxazole containing antibiotics involves the enzymatic condensation of a Cys, Ser or Thr with the alpha-carbonyl of the preceding amino acid to form a thioether or ether bond, then dehydration to form a double bond with the alpha-amino nitrogen. Thiazoline or oxazoline ring are dehydrogenated to form thiazole or oxazole rings.

It is found in the secreted. Its subcellular location is the cell wall. In terms of biological role, peptide antibiotic inhibiting growth of Gram-positive bacteria. The mode of action appears to be disruption of cell walls and lysis of cells. The protein is Plantazolicin of Bacillus pumilus (strain ATCC 7061 / DSM 27 / CCUG 26015 / JCM 2508 / NBRC 12092 / NCIMB 9369 / NCTC 10337 / NRRL NRS-272 / CCM 2144).